Consider the following 472-residue polypeptide: Ribosomal protein uS12 methylthiotransferase RimO (472 aa).

The MTTase N-terminal domain occupies 33-143 (NRIGFVSLGC…VLKHVHKYVP (111 aa)). [4Fe-4S] cluster is bound by residues C42, C78, C107, C175, C179, and C182. The Radical SAM core domain maps to 161-398 (LTPKHYAYLK…MELQAEISAE (238 aa)). Positions 401 to 467 (ARFVGRTLDI…EHDLWAEVVD (67 aa)) constitute a TRAM domain.

The protein belongs to the methylthiotransferase family. RimO subfamily. [4Fe-4S] cluster serves as cofactor.

It localises to the cytoplasm. The enzyme catalyses L-aspartate(89)-[ribosomal protein uS12]-hydrogen + (sulfur carrier)-SH + AH2 + 2 S-adenosyl-L-methionine = 3-methylsulfanyl-L-aspartate(89)-[ribosomal protein uS12]-hydrogen + (sulfur carrier)-H + 5'-deoxyadenosine + L-methionine + A + S-adenosyl-L-homocysteine + 2 H(+). Its function is as follows. Catalyzes the methylthiolation of an aspartic acid residue of ribosomal protein uS12. The protein is Ribosomal protein uS12 methylthiotransferase RimO of Shewanella sp. (strain W3-18-1).